The sequence spans 582 residues: Leucine-rich repeat protein SHOC-2 (582 aa).

2 stretches are compositionally biased toward basic and acidic residues: residues 1–29 (MSSSLGKEKDSKEKDPKVPSAKEREKEAK) and 36–57 (KESKEKEPKTKGKDAKDGKKDS). The interval 1–88 (MSSSLGKEKD…PGTRKKSSNA (88 aa)) is disordered. The RVxF motif; important for interaction with PP1c signature appears at 63 to 66 (GVAF). LRR repeat units follow at residues 101–122 (NSMRLDLSKRSIHILPSSIKEL), 124–145 (QLTELYLYSNKLQSLPAEVGCL), 147–169 (NLMTLALSENSLTSLPDSLDNLK), 170–191 (KLRMLDLRHNKLREIPSVVYRL), 193–214 (SLTTLYLRFNRITTVEKDIKNL), 216–237 (KLSMLSIRENKIKQLPAEIGEL), 239–260 (NLITLDVAHNQLEHLPKEIGNC), 262–283 (QITNLDLQHNELLDLPDTIGNL), 285–307 (SLSRLGLRYNRLSAIPRSLAKCS), 308–329 (ALEELNLENNNISTLPESLLSS), 332–353 (KLNSLTLARNCFQLYPVGGPSQ), 356–377 (TIYSLNMEHNRINKIPFGIFSR), 380–400 (VLSKLNMKDNQLTSLPLDFGT), 403–424 (SMVELNLATNQLTKIPEDVSGL), 426–448 (SLEVLILSNNLLKKLPHGLGNLR), 449–470 (KLRELDLEENKLESLPNEIAYL), 472–494 (DLQKLVLTNNQLTTLPRGIGHLT), 495–516 (NLTHLGLGENLLTHLPEEIGTL), 518–540 (NLEELYLNDNPNLHSLPFELALC), and 542–563 (KLSIMSIENCPLSHLPPQIVAG).

Belongs to the SHOC2 family. As to quaternary structure, component of the SHOC2-MRAS-PP1c (SMP) complex consisting of SHOC2, GTP-bound M-Ras/MRAS and the catalytic subunit of protein phosphatase 1 (either PPP1CA, PPP1CB or PPP1CC). SHOC2 and PP1c preferably bind M-Ras/MRAS, but they also bind K-Ras/KRAS, N-Ras/NRAS and H-Ras/HRAS; these interactions are GTP-dependent and both SHOC2 and PP1c are required to form a stable complex. Interacts with PP1c in the absence of Ras GTPases. Interacts with M-Ras/MRAS and RAF1. Interacts with ERBIN; disrupts the interaction with RAF1 and Ras, preventing the activation of the Ras signaling pathway. Interacts with LZTR1.

It localises to the cytoplasm. The protein localises to the nucleus. Functionally, core component of the SHOC2-MRAS-PP1c (SMP) holophosphatase complex that regulates activation of the MAPK pathway. Acts as a scaffolding protein in the SMP complex. The SMP complex specifically dephosphorylates the inhibitory phosphorylation at 'Ser-259' of RAF1 kinase, 'Ser-365' of BRAF kinase and 'Ser-214' of ARAF kinase, stimulating their kinase activities. The SMP complex enhances the dephosphorylation activity and substrate specificity of PP1c. The chain is Leucine-rich repeat protein SHOC-2 (SHOC2) from Homo sapiens (Human).